Consider the following 563-residue polypeptide: CDKN2A-interacting protein (563 aa).

Alanine 2 bears the N-acetylalanine mark. The XRN2-binding (XTBD) domain maps to 19-126; sequence VETLRCEGET…KVKKRGISSS (108 aa). Disordered regions lie at residues 122-289 and 304-351; these read GISS…LLGS and SSSE…PSLL. Phosphoserine is present on serine 124. Residues 147-160 show a composition bias toward basic and acidic residues; sequence VERDHGKKSAKTDR. 2 stretches are compositionally biased toward low complexity: residues 168-216 and 234-248; these read SSPS…SSQV and SASF…SMNS. Lysine 177 is covalently cross-linked (Glycyl lysine isopeptide (Lys-Gly) (interchain with G-Cter in SUMO1)). Serine 234 is subject to Phosphoserine. A compositionally biased stretch (polar residues) spans 249-262; sequence HMTQSTDNRQQSGS. Positions 270 to 280 are enriched in low complexity; sequence GSSGSASQSSS. At threonine 340 the chain carries Phosphothreonine. Residue serine 371 is modified to Phosphoserine. Positions 445 to 520 constitute a DRBM domain; sequence NHGELLNAAI…SREALKLFLK (76 aa).

The protein belongs to the CARF family. In terms of assembly, interacts with CDKN2A/p14ARF, p53/TP53 and MDM2. Interacts with CHEK2 and MAPK3. Interacts with XRN2. Post-translationally, may be ubiquitinated.

The protein localises to the nucleus. Its subcellular location is the nucleoplasm. Functionally, regulates DNA damage response and cell proliferation in a dose-dependent manner through a number of signaling pathways involved in cell proliferation, apoptosis and senescence. This Mus musculus (Mouse) protein is CDKN2A-interacting protein (Cdkn2aip).